The chain runs to 449 residues: Tubulin alpha chain (449 aa).

Residues glutamine 11, glutamate 71, serine 140, glycine 144, threonine 145, threonine 179, asparagine 206, and asparagine 228 each contribute to the GTP site. Mg(2+) is bound at residue glutamate 71. The active site involves glutamate 254.

The protein belongs to the tubulin family. As to quaternary structure, dimer of alpha and beta chains. A typical microtubule is a hollow water-filled tube with an outer diameter of 25 nm and an inner diameter of 15 nM. Alpha-beta heterodimers associate head-to-tail to form protofilaments running lengthwise along the microtubule wall with the beta-tubulin subunit facing the microtubule plus end conferring a structural polarity. Microtubules usually have 13 protofilaments but different protofilament numbers can be found in some organisms and specialized cells. The cofactor is Mg(2+).

The protein localises to the cytoplasm. The protein resides in the cytoskeleton. It carries out the reaction GTP + H2O = GDP + phosphate + H(+). Tubulin is the major constituent of microtubules, a cylinder consisting of laterally associated linear protofilaments composed of alpha- and beta-tubulin heterodimers. Microtubules grow by the addition of GTP-tubulin dimers to the microtubule end, where a stabilizing cap forms. Below the cap, tubulin dimers are in GDP-bound state, owing to GTPase activity of alpha-tubulin. This Gibberella zeae (strain ATCC MYA-4620 / CBS 123657 / FGSC 9075 / NRRL 31084 / PH-1) (Wheat head blight fungus) protein is Tubulin alpha chain (TUB1).